The following is a 278-amino-acid chain: MKRILVVSGLSGAGKSTVARVLEDIGFFCIDNLPPALLNDFMVLLSSSSIDKVALVVDIRSAQLGNAVQAIKKLVDNYSNIVTVLFLEASDEELLKRFATTRRRHPLEGQLSLQEAISKEKELLRDMKEMSVVIDTTGLDIHTLREKIGSLLKEEAQFVIRIRSFGFKYGLPADTDFIIDTRFLPNPYYDRKLAQLNGTDQEIVNFFSKYPVVEDFIQYTYKLLHIAATRYKSEGRPFMTVSIGCTGGRHRSVYVAEKLSKILKDRFYVYVEHRDVNK.

9–16 (GLSGAGKS) contacts ATP. 58–61 (DIRS) lines the GTP pocket.

Belongs to the RapZ-like family.

Functionally, displays ATPase and GTPase activities. This chain is Nucleotide-binding protein Tlet_0523, found in Pseudothermotoga lettingae (strain ATCC BAA-301 / DSM 14385 / NBRC 107922 / TMO) (Thermotoga lettingae).